A 191-amino-acid polypeptide reads, in one-letter code: Protein GrpE (191 aa).

This sequence belongs to the GrpE family. As to quaternary structure, homodimer.

It is found in the cytoplasm. Participates actively in the response to hyperosmotic and heat shock by preventing the aggregation of stress-denatured proteins, in association with DnaK and GrpE. It is the nucleotide exchange factor for DnaK and may function as a thermosensor. Unfolded proteins bind initially to DnaJ; upon interaction with the DnaJ-bound protein, DnaK hydrolyzes its bound ATP, resulting in the formation of a stable complex. GrpE releases ADP from DnaK; ATP binding to DnaK triggers the release of the substrate protein, thus completing the reaction cycle. Several rounds of ATP-dependent interactions between DnaJ, DnaK and GrpE are required for fully efficient folding. The protein is Protein GrpE of Listeria monocytogenes serotype 4b (strain CLIP80459).